The primary structure comprises 347 residues: Suppressor of RNA-mediated gene silencing (347 aa).

Belongs to the phytoreovirus non-structural protein 10 family.

Functionally, suppressor of RNA-mediated gene silencing, also known as post-transcriptional gene silencing (PTGS), a mechanism of plant viral defense that limits the accumulation of viral RNAs. This is Suppressor of RNA-mediated gene silencing from Catharanthus roseus (Madagascar periwinkle).